We begin with the raw amino-acid sequence, 242 residues long: 3-oxoacyl-[acyl-carrier-protein] reductase FabG (242 aa).

Residues 9 to 12, Arg34, 60 to 61, and Asn87 each bind NADP(+); these read GSSR and DV. Residue Ser140 coordinates substrate. Tyr153 functions as the Proton acceptor in the catalytic mechanism. NADP(+)-binding positions include 153-157 and Ile186; that span reads YSASK.

This sequence belongs to the short-chain dehydrogenases/reductases (SDR) family. As to quaternary structure, homotetramer.

It catalyses the reaction a (3R)-hydroxyacyl-[ACP] + NADP(+) = a 3-oxoacyl-[ACP] + NADPH + H(+). The protein operates within lipid metabolism; fatty acid biosynthesis. Functionally, catalyzes the NADPH-dependent reduction of beta-ketoacyl-ACP substrates to beta-hydroxyacyl-ACP products, the first reductive step in the elongation cycle of fatty acid biosynthesis. The chain is 3-oxoacyl-[acyl-carrier-protein] reductase FabG (fabG) from Aggregatibacter actinomycetemcomitans (Actinobacillus actinomycetemcomitans).